The primary structure comprises 54 residues: UPF0391 membrane protein Sde_0270 (54 aa).

The next 2 helical transmembrane spans lie at 6–26 and 29–49; these read IVFL…IAGV and GIAK…LVIG.

This sequence belongs to the UPF0391 family.

It is found in the cell membrane. This Saccharophagus degradans (strain 2-40 / ATCC 43961 / DSM 17024) protein is UPF0391 membrane protein Sde_0270.